Here is a 358-residue protein sequence, read N- to C-terminus: uncharacterized protein (358 aa).

Belongs to the SMP-30/CGR1 family.

This is an uncharacterized protein from Saccharomyces cerevisiae (strain ATCC 204508 / S288c) (Baker's yeast).